A 170-amino-acid chain; its full sequence is NADH-ubiquinone oxidoreductase chain 6 (170 aa).

A run of 5 helical transmembrane segments spans residues 1–21 (MIYMVSVSMMVLVLGLVAVAS), 26–46 (FYAALGLVLAAGAGCLVIVSF), 49–69 (SFLSIVLFLIYLGGMLVVFAY), 86–106 (VVFYVLVYLIGVLVWYLFLGG), and 138–158 (WVIIVYWWVSIIINFVCGIWV).

This sequence belongs to the complex I subunit 6 family. As to quaternary structure, core subunit of respiratory chain NADH dehydrogenase (Complex I) which is composed of 45 different subunits.

It is found in the mitochondrion inner membrane. The catalysed reaction is a ubiquinone + NADH + 5 H(+)(in) = a ubiquinol + NAD(+) + 4 H(+)(out). Core subunit of the mitochondrial membrane respiratory chain NADH dehydrogenase (Complex I) which catalyzes electron transfer from NADH through the respiratory chain, using ubiquinone as an electron acceptor. Essential for the catalytic activity and assembly of complex I. The protein is NADH-ubiquinone oxidoreductase chain 6 (mt-nd6) of Xenopus laevis (African clawed frog).